We begin with the raw amino-acid sequence, 329 residues long: Cytosolic arginine sensor for mTORC1 subunit 1 (329 aa).

S14 carries the post-translational modification Phosphoserine. ACT domains are found at residues A72–A138 and G260–Q321. L-arginine is bound by residues S111 to V112, G274, I280 to V281, and T300 to D304.

It belongs to the GATS family. Forms homodimers and heterodimers with CASTOR2. Interacts with the GATOR2 complex which is composed of MIOS, SEC13, SEH1L, WDR24 and WDR59; the interaction is negatively regulated by arginine. Interacts with TM4SF5; the interaction is positively regulated by leucine and is negatively regulated by arginine. Post-translationally, phosphorylation at Ser-14 by AKT1, promoting the interaction between CASTOR1 and RNF167. In terms of processing, ubiquitinated by RNF167 via 'Lys-29'-polyubiquitination, leading to its degradation, releasing the GATOR2 complex. Ubiquitination by RNF167 is promoted by phosphorylation at Ser-14 by AKT1.

The protein resides in the cytoplasm. Its subcellular location is the cytosol. Functionally, functions as an intracellular arginine sensor within the amino acid-sensing branch of the TORC1 signaling pathway. As a homodimer or a heterodimer with CASTOR2, binds and inhibits the GATOR subcomplex GATOR2 and thereby mTORC1. Binding of arginine to CASTOR1 allosterically disrupts the interaction of CASTOR1-containing dimers with GATOR2 which can in turn activate mTORC1 and the TORC1 signaling pathway. The sequence is that of Cytosolic arginine sensor for mTORC1 subunit 1 from Bos taurus (Bovine).